The primary structure comprises 834 residues: Translation factor GUF1 homolog, mitochondrial (834 aa).

The transit peptide at 1 to 66 (MKLCGVRSSG…RPLLAEPRRY (66 aa)) directs the protein to the mitochondrion. Residues 129–314 (ACIRNVSVVA…HIIDKVPPPC (186 aa)) form the tr-type G domain. Residues 138 to 145 (AHVDHGKT), 205 to 209 (DTPGH), and 259 to 262 (TKMD) each bind GTP. Disordered regions lie at residues 363–385 (GAAS…ASGG) and 476–507 (TGSP…SSSV). Over residues 488–507 (ATAAETASSDDASGSGSSSV) the composition is skewed to low complexity.

This sequence belongs to the TRAFAC class translation factor GTPase superfamily. Classic translation factor GTPase family. LepA subfamily.

The protein localises to the mitochondrion inner membrane. The enzyme catalyses GTP + H2O = GDP + phosphate + H(+). Promotes mitochondrial protein synthesis. May act as a fidelity factor of the translation reaction, by catalyzing a one-codon backward translocation of tRNAs on improperly translocated ribosomes. Binds to mitochondrial ribosomes in a GTP-dependent manner. This chain is Translation factor GUF1 homolog, mitochondrial, found in Leishmania infantum.